The primary structure comprises 278 residues: MAATKRAACLIGWPAAHSRSPLIHHYWLRRLGIEGGYSIEAVPPEGFAEFVLHLKTHGYVGANVTIPHKERALQLTEPDERARAVGAANTLYYDGDLLRSTNTDIEGFIGNLDASAPGWDRSPHAVVLGAGGSSRAVVFGLLERGVQRIALANRSIERAQALRDLFGERVVPIAWSDIPAALPGAGLLVNTTSLGMKGQPPLQIDLSALPADAVVSDLVYVPLETDLLAAAKARGLRTADGLGMLLHQAVRGFDLWFGARPHVTAELRALVEADLAPK.

Shikimate-binding positions include 18–20 and Thr65; that span reads SRS. The active-site Proton acceptor is the Lys69. Glu80 contributes to the NADP(+) binding site. Residues Asn89 and Asp104 each contribute to the shikimate site. NADP(+)-binding positions include 129–133 and Leu218; that span reads GAGGS. Tyr220 serves as a coordination point for shikimate. Position 241 (Gly241) interacts with NADP(+).

It belongs to the shikimate dehydrogenase family. Homodimer.

The catalysed reaction is shikimate + NADP(+) = 3-dehydroshikimate + NADPH + H(+). It participates in metabolic intermediate biosynthesis; chorismate biosynthesis; chorismate from D-erythrose 4-phosphate and phosphoenolpyruvate: step 4/7. In terms of biological role, involved in the biosynthesis of the chorismate, which leads to the biosynthesis of aromatic amino acids. Catalyzes the reversible NADPH linked reduction of 3-dehydroshikimate (DHSA) to yield shikimate (SA). The sequence is that of Shikimate dehydrogenase (NADP(+)) from Rhodopseudomonas palustris (strain TIE-1).